Here is a 292-residue protein sequence, read N- to C-terminus: Lipoyl synthase (292 aa).

[4Fe-4S] cluster-binding residues include Cys-34, Cys-39, Cys-45, Cys-60, Cys-64, Cys-67, and Ser-273. One can recognise a Radical SAM core domain in the interval 46–262 (WNKKHATVMI…KYVAYSKGFL (217 aa)).

Belongs to the radical SAM superfamily. Lipoyl synthase family. Requires [4Fe-4S] cluster as cofactor.

Its subcellular location is the cytoplasm. It catalyses the reaction [[Fe-S] cluster scaffold protein carrying a second [4Fe-4S](2+) cluster] + N(6)-octanoyl-L-lysyl-[protein] + 2 oxidized [2Fe-2S]-[ferredoxin] + 2 S-adenosyl-L-methionine + 4 H(+) = [[Fe-S] cluster scaffold protein] + N(6)-[(R)-dihydrolipoyl]-L-lysyl-[protein] + 4 Fe(3+) + 2 hydrogen sulfide + 2 5'-deoxyadenosine + 2 L-methionine + 2 reduced [2Fe-2S]-[ferredoxin]. It participates in protein modification; protein lipoylation via endogenous pathway; protein N(6)-(lipoyl)lysine from octanoyl-[acyl-carrier-protein]: step 2/2. Functionally, catalyzes the radical-mediated insertion of two sulfur atoms into the C-6 and C-8 positions of the octanoyl moiety bound to the lipoyl domains of lipoate-dependent enzymes, thereby converting the octanoylated domains into lipoylated derivatives. This Ehrlichia ruminantium (strain Welgevonden) protein is Lipoyl synthase.